We begin with the raw amino-acid sequence, 371 residues long: DNA repair and recombination protein rti1 (371 aa).

Residues 346–371 (IDHNRSMPIRRPSLTSNNSANTFSTK) form a disordered region. The span at 358–371 (SLTSNNSANTFSTK) shows a compositional bias: polar residues.

The protein belongs to the RAD52 family. In terms of assembly, interacts with rph51 and rph54.

Active in the repair of DNA damage and in mating-type switching. Probably involved in the repair of DNA double-strands breaks. Has a role in promoting S phase completion. The polypeptide is DNA repair and recombination protein rti1 (rti1) (Schizosaccharomyces pombe (strain 972 / ATCC 24843) (Fission yeast)).